Consider the following 57-residue polypeptide: MAVPKKRTSIYKKRIRKNIWKKKGYWAALKAFSLAKSLSTGNSKSFFVRKISNQTLE.

In terms of assembly, component of the chloroplast large ribosomal subunit (LSU). Mature 70S chloroplast ribosomes of higher plants consist of a small (30S) and a large (50S) subunit. The 30S small subunit contains 1 molecule of ribosomal RNA (16S rRNA) and 24 different proteins. The 50S large subunit contains 3 rRNA molecules (23S, 5S and 4.5S rRNA) and 33 different proteins.

It is found in the plastid. The protein resides in the chloroplast. Functionally, component of the chloroplast ribosome (chloro-ribosome), a dedicated translation machinery responsible for the synthesis of chloroplast genome-encoded proteins, including proteins of the transcription and translation machinery and components of the photosynthetic apparatus. In Spinacia oleracea (Spinach), this protein is Large ribosomal subunit protein bL32c (rpl32).